A 964-amino-acid chain; its full sequence is Translation initiation factor IF-2 (964 aa).

Over residues 1-10 (MSDKTNDDKT) the composition is skewed to basic and acidic residues. The segment at 1–379 (MSDKTNDDKT…SQMQETREKI (379 aa)) is disordered. The span at 27-37 (EQSTVRQNFSH) shows a compositional bias: polar residues. The span at 77 to 102 (APAASTPAPAQAAQPAQAAPVVRAPA) shows a compositional bias: low complexity. A compositionally biased stretch (pro residues) spans 103–113 (PATPAPKPAAP). Over residues 114–140 (AAPVTKPHVAQQRPAQQRPGGQQAQRP) the composition is skewed to low complexity. Composition is skewed to basic and acidic residues over residues 156-227 (SEMD…EAAK) and 234-243 (ARTERRDDAR). Over residues 250 to 278 (RPQQAGRPQGNRPPQGGRPQQGGPRPAAP) the composition is skewed to low complexity. A compositionally biased stretch (basic and acidic residues) spans 323-338 (PEVRAPKVVKTEDDRR). Residues 462–629 (SRPPVVTIMG…AILLQAEILD (168 aa)) enclose the tr-type G domain. Residues 471–478 (GHVDHGKT) form a G1 region. Residue 471-478 (GHVDHGKT) participates in GTP binding. Residues 496-500 (GITQH) are G2. Positions 517–520 (DTPG) are G3. Residues 517 to 521 (DTPGH) and 571 to 574 (NKID) each bind GTP. Positions 571-574 (NKID) are G4. The segment at 607-609 (SAK) is G5.

This sequence belongs to the TRAFAC class translation factor GTPase superfamily. Classic translation factor GTPase family. IF-2 subfamily.

Its subcellular location is the cytoplasm. One of the essential components for the initiation of protein synthesis. Protects formylmethionyl-tRNA from spontaneous hydrolysis and promotes its binding to the 30S ribosomal subunits. Also involved in the hydrolysis of GTP during the formation of the 70S ribosomal complex. This Brucella anthropi (strain ATCC 49188 / DSM 6882 / CCUG 24695 / JCM 21032 / LMG 3331 / NBRC 15819 / NCTC 12168 / Alc 37) (Ochrobactrum anthropi) protein is Translation initiation factor IF-2.